Consider the following 169-residue polypeptide: uncharacterized protein (169 aa).

The region spanning 18 to 130 (VVEHCLAVSE…VAHADNLIFG (113 aa)) is the HD domain.

This is an uncharacterized protein from Methanocaldococcus jannaschii (strain ATCC 43067 / DSM 2661 / JAL-1 / JCM 10045 / NBRC 100440) (Methanococcus jannaschii).